The following is a 78-amino-acid chain: Acyl carrier protein BQ2027_MB0103 (78 aa).

Residues 1 to 78 (MRDRILAAVC…ELEAVCTEFG (78 aa)) enclose the Carrier domain. Ser-35 carries the post-translational modification O-(pantetheine 4'-phosphoryl)serine.

It belongs to the acyl carrier protein (ACP) family. The cofactor is pantetheine 4'-phosphate.

Its pathway is lipid metabolism; fatty acid metabolism. Functionally, acyl-carrier protein (ACP) involved in the biosynthesis of a unique class of isonitrile lipopeptides (INLPs) that seem to play a role in metal acquisition. Is the dedicated ACP for the loading of activated acyl groups catalyzed by FadD10. The polypeptide is Acyl carrier protein BQ2027_MB0103 (Mycobacterium bovis (strain ATCC BAA-935 / AF2122/97)).